Consider the following 198-residue polypeptide: UPF0215 protein NEQ431 (198 aa).

A disordered region spans residues 179 to 198 (TKGDSSKPRAGGDSNPGPAG).

The protein belongs to the UPF0215 family.

This chain is UPF0215 protein NEQ431, found in Nanoarchaeum equitans (strain Kin4-M).